Consider the following 464-residue polypeptide: Cystathionine beta-lyase, chloroplastic (464 aa).

The transit peptide at 1 to 55 directs the protein to the chloroplast; sequence MTSSLSLHSSFVPSFADLSDRGLISKNSPTSVSISKVPTWEKKQISNRNSFKLNC. Residues Tyr127, Arg129, Gly157, Met158, Ser275, and Thr277 each contribute to the pyridoxal 5'-phosphate site. Position 278 is an N6-(pyridoxal phosphate)lysine (Lys278).

This sequence belongs to the trans-sulfuration enzymes family. As to quaternary structure, forms homodimers. May form homotetramers from two homodimers. Pyridoxal 5'-phosphate is required as a cofactor.

The protein resides in the plastid. Its subcellular location is the chloroplast. The catalysed reaction is L,L-cystathionine + H2O = L-homocysteine + pyruvate + NH4(+). The enzyme catalyses an S-substituted L-cysteine + H2O = a thiol + pyruvate + NH4(+). It participates in amino-acid biosynthesis; L-methionine biosynthesis via de novo pathway; L-homocysteine from L-cystathionine: step 1/1. Its function is as follows. Catalyzes the penultimate step in the de novo biosynthesis of methionine. Its role in methionine metabolism may affect plant development in different organs, probably by modifying plant auxin transport. Its cysteine desulfhydrase activity may be involved in hydrogen sulfur production using L-cysteine as a substrate. The protein is Cystathionine beta-lyase, chloroplastic of Arabidopsis thaliana (Mouse-ear cress).